The following is a 188-amino-acid chain: MANWQSIDELQDIASDLPRFIHALDELSRRLGLNITPLTADHISLRCHQNATAERWRRGFEQCGELLSENMINGRPICLFKLHEPVQVAHWQFSIVELPWPGEKRYPHEGWEHIEIVLPGDPETLNARALALLSDEGLSLPGISVKTSSPKGEHERLPNPTLAVTDGKTTIKFHPWSIEEIVASEQSA.

It to H.influenzae HI_1582/HI_1581.

In Escherichia coli (strain K12), this protein is Protein YecM (yecM).